We begin with the raw amino-acid sequence, 121 residues long: Large ribosomal subunit protein bL12 (121 aa).

This sequence belongs to the bacterial ribosomal protein bL12 family. In terms of assembly, homodimer. Part of the ribosomal stalk of the 50S ribosomal subunit. Forms a multimeric L10(L12)X complex, where L10 forms an elongated spine to which 2 to 4 L12 dimers bind in a sequential fashion. Binds GTP-bound translation factors.

Functionally, forms part of the ribosomal stalk which helps the ribosome interact with GTP-bound translation factors. Is thus essential for accurate translation. The polypeptide is Large ribosomal subunit protein bL12 (Enterobacter sp. (strain 638)).